The primary structure comprises 904 residues: Thiamine diphosphate dependent-3-acetyloctanal synthase PigD (904 aa).

Positions 879–904 are disordered; sequence RKAWAAQQPESTSTAFDQDPTQEATS. Residues 886–904 show a composition bias toward polar residues; sequence QPESTSTAFDQDPTQEATS.

Belongs to the TPP enzyme family. Thiamine diphosphate is required as a cofactor.

The enzyme catalyses (2E)-octenal + pyruvate + H(+) = (S)-3-acetyloctanal + CO2. It functions in the pathway antibiotic biosynthesis; prodigiosin biosynthesis. Its function is as follows. Involved in the biosynthesis of 2-methyl-3-n-amyl-pyrrole (MAP), one of the terminal products involved in the biosynthesis of the red antibiotic prodigiosin (Pig). Catalyzes the decarboxylation of pyruvate, followed by the modification of the resulting two-carbon fragment acetaldehyde at the C3 position of the 2-octenal (1,2-addition of acetaldehyde) giving 3-acetyloctanal. In vitro, it can act on a number of alpha,beta-unsaturated carbonyl compounds, including aldehydes and ketones, and can catalyze both 1,2-addition and Stetter-type 1,4-addition depending on the substrate. The protein is Thiamine diphosphate dependent-3-acetyloctanal synthase PigD of Serratia marcescens.